The sequence spans 311 residues: DNA-directed RNA polymerase subunit alpha (311 aa).

Residues 1-227 (MAQFQIECVE…NLFCSLRNLD (227 aa)) form an alpha N-terminal domain (alpha-NTD) region. Positions 242 to 311 (ISQVLIEELQ…GISLPKEKTD (70 aa)) are alpha C-terminal domain (alpha-CTD).

This sequence belongs to the RNA polymerase alpha chain family. In terms of assembly, in plastids the minimal PEP RNA polymerase catalytic core is composed of four subunits: alpha, beta, beta', and beta''. When a (nuclear-encoded) sigma factor is associated with the core the holoenzyme is formed, which can initiate transcription.

The protein resides in the plastid. The protein localises to the chloroplast. The enzyme catalyses RNA(n) + a ribonucleoside 5'-triphosphate = RNA(n+1) + diphosphate. In terms of biological role, DNA-dependent RNA polymerase catalyzes the transcription of DNA into RNA using the four ribonucleoside triphosphates as substrates. This chain is DNA-directed RNA polymerase subunit alpha, found in Porphyra purpurea (Red seaweed).